The chain runs to 354 residues: Uroporphyrinogen decarboxylase (354 aa).

Substrate is bound by residues 27 to 31 (RQAGR), Asp-77, Tyr-154, Ser-209, and His-327.

This sequence belongs to the uroporphyrinogen decarboxylase family. Homodimer.

The protein resides in the cytoplasm. The catalysed reaction is uroporphyrinogen III + 4 H(+) = coproporphyrinogen III + 4 CO2. Its pathway is porphyrin-containing compound metabolism; protoporphyrin-IX biosynthesis; coproporphyrinogen-III from 5-aminolevulinate: step 4/4. In terms of biological role, catalyzes the decarboxylation of four acetate groups of uroporphyrinogen-III to yield coproporphyrinogen-III. The protein is Uroporphyrinogen decarboxylase of Shewanella loihica (strain ATCC BAA-1088 / PV-4).